A 471-amino-acid polypeptide reads, in one-letter code: ATP synthase subunit beta 2 (471 aa).

157–164 (GGAGVGKT) contacts ATP.

It belongs to the ATPase alpha/beta chains family. As to quaternary structure, F-type ATPases have 2 components, CF(1) - the catalytic core - and CF(0) - the membrane proton channel. CF(1) has five subunits: alpha(3), beta(3), gamma(1), delta(1), epsilon(1). CF(0) has three main subunits: a(1), b(2) and c(9-12). The alpha and beta chains form an alternating ring which encloses part of the gamma chain. CF(1) is attached to CF(0) by a central stalk formed by the gamma and epsilon chains, while a peripheral stalk is formed by the delta and b chains.

The protein resides in the cell inner membrane. It carries out the reaction ATP + H2O + 4 H(+)(in) = ADP + phosphate + 5 H(+)(out). Produces ATP from ADP in the presence of a proton gradient across the membrane. The catalytic sites are hosted primarily by the beta subunits. In Pelobacter propionicus (strain DSM 2379 / NBRC 103807 / OttBd1), this protein is ATP synthase subunit beta 2.